The primary structure comprises 243 residues: Carboxy-S-adenosyl-L-methionine synthase (243 aa).

S-adenosyl-L-methionine contacts are provided by residues Tyr40, 65-67 (GCS), 90-91 (DN), 118-119 (DI), Asn133, and Arg200.

This sequence belongs to the class I-like SAM-binding methyltransferase superfamily. Cx-SAM synthase family. In terms of assembly, homodimer.

It catalyses the reaction prephenate + S-adenosyl-L-methionine = carboxy-S-adenosyl-L-methionine + 3-phenylpyruvate + H2O. Catalyzes the conversion of S-adenosyl-L-methionine (SAM) to carboxy-S-adenosyl-L-methionine (Cx-SAM). The polypeptide is Carboxy-S-adenosyl-L-methionine synthase (Shewanella loihica (strain ATCC BAA-1088 / PV-4)).